The sequence spans 477 residues: Glutamyl-tRNA reductase (477 aa).

Substrate contacts are provided by residues 49 to 52 (TCNR), serine 109, 114 to 116 (EQQ), and glutamine 120. Catalysis depends on cysteine 50, which acts as the Nucleophile. 189 to 194 (GAGAMG) provides a ligand contact to NADP(+).

The protein belongs to the glutamyl-tRNA reductase family. Homodimer.

It catalyses the reaction (S)-4-amino-5-oxopentanoate + tRNA(Glu) + NADP(+) = L-glutamyl-tRNA(Glu) + NADPH + H(+). It participates in porphyrin-containing compound metabolism; protoporphyrin-IX biosynthesis; 5-aminolevulinate from L-glutamyl-tRNA(Glu): step 1/2. In terms of biological role, catalyzes the NADPH-dependent reduction of glutamyl-tRNA(Glu) to glutamate 1-semialdehyde (GSA). In Nocardia farcinica (strain IFM 10152), this protein is Glutamyl-tRNA reductase.